Reading from the N-terminus, the 553-residue chain is Terpene synthase 16 (553 aa).

Asp303, Asp307, and Glu457 together coordinate Mg(2+). The DDXXD motif signature appears at 303–307 (DDTYD).

Belongs to the terpene synthase family. Tpsa subfamily. Requires Mg(2+) as cofactor. The cofactor is Mn(2+). In terms of tissue distribution, expressed in leaves, trichomes and flowers.

The protein operates within secondary metabolite biosynthesis; terpenoid biosynthesis. Sesquiterpene synthase involved in the biosynthesis of volatile compounds. No activity detected with geranyl diphosphate (GPP) and farnesyl diphosphate (FPP) as substrates. This is Terpene synthase 16 from Solanum lycopersicum (Tomato).